A 237-amino-acid polypeptide reads, in one-letter code: UPF0280 protein Mpal_1292 (237 aa).

It belongs to the UPF0280 family.

This is UPF0280 protein Mpal_1292 from Methanosphaerula palustris (strain ATCC BAA-1556 / DSM 19958 / E1-9c).